The following is a 246-amino-acid chain: MSGHSKWHNIQAKKSKVDAKRGKIFTKIGKEIAIAAKNGGPNPDANPKLRDVIAKAKANNMPKDSIERAIKKAAGELAGVNYEEILYEGYGPDGIAVLVQALTDNKNRSAGNVRHAFSKHGGNLGSTGCVSFMFQTKGQIVIEKNDELDEEELMMMALECGAEDFQSEDEVYIITTSPEDFGSVRETLEEKGLEFLEAEVKSIPDTYTVIDENTAGKFQKMLDVLEDDEDVQDVYHNAEFPEGWEE.

It belongs to the TACO1 family.

Its subcellular location is the cytoplasm. The chain is Probable transcriptional regulatory protein ORF2U from Hathewaya histolytica (Clostridium histolyticum).